A 615-amino-acid chain; its full sequence is uncharacterized protein (615 aa).

This sequence belongs to the mycobacterial PPE family.

This is an uncharacterized protein from Mycobacterium tuberculosis (strain CDC 1551 / Oshkosh).